The chain runs to 213 residues: Imidazole glycerol phosphate synthase subunit HisH (213 aa).

Residues 4–213 (SIAIVDYGMG…LYRNFVHWNP (210 aa)) enclose the Glutamine amidotransferase type-1 domain. The active-site Nucleophile is cysteine 83. Catalysis depends on residues histidine 193 and glutamate 195.

As to quaternary structure, heterodimer of HisH and HisF.

It is found in the cytoplasm. It catalyses the reaction 5-[(5-phospho-1-deoxy-D-ribulos-1-ylimino)methylamino]-1-(5-phospho-beta-D-ribosyl)imidazole-4-carboxamide + L-glutamine = D-erythro-1-(imidazol-4-yl)glycerol 3-phosphate + 5-amino-1-(5-phospho-beta-D-ribosyl)imidazole-4-carboxamide + L-glutamate + H(+). The catalysed reaction is L-glutamine + H2O = L-glutamate + NH4(+). The protein operates within amino-acid biosynthesis; L-histidine biosynthesis; L-histidine from 5-phospho-alpha-D-ribose 1-diphosphate: step 5/9. Its function is as follows. IGPS catalyzes the conversion of PRFAR and glutamine to IGP, AICAR and glutamate. The HisH subunit catalyzes the hydrolysis of glutamine to glutamate and ammonia as part of the synthesis of IGP and AICAR. The resulting ammonia molecule is channeled to the active site of HisF. The chain is Imidazole glycerol phosphate synthase subunit HisH from Burkholderia pseudomallei (strain K96243).